The primary structure comprises 143 residues: Ribosome maturation factor RimP (143 aa).

The protein belongs to the RimP family.

The protein localises to the cytoplasm. Required for maturation of 30S ribosomal subunits. The protein is Ribosome maturation factor RimP of Borrelia hermsii (strain HS1 / DAH).